The sequence spans 110 residues: Large ribosomal subunit protein uL22 (110 aa).

It belongs to the universal ribosomal protein uL22 family. Part of the 50S ribosomal subunit.

This protein binds specifically to 23S rRNA; its binding is stimulated by other ribosomal proteins, e.g. L4, L17, and L20. It is important during the early stages of 50S assembly. It makes multiple contacts with different domains of the 23S rRNA in the assembled 50S subunit and ribosome. Functionally, the globular domain of the protein is located near the polypeptide exit tunnel on the outside of the subunit, while an extended beta-hairpin is found that lines the wall of the exit tunnel in the center of the 70S ribosome. This Halorhodospira halophila (strain DSM 244 / SL1) (Ectothiorhodospira halophila (strain DSM 244 / SL1)) protein is Large ribosomal subunit protein uL22.